Here is a 543-residue protein sequence, read N- to C-terminus: Serendipity locus protein alpha (543 aa).

It is found in the cytoplasm. The protein localises to the cell membrane. Functionally, required for the cellularization of the syncytial blastoderm embryo. Involved in the localization of the actin filaments just prior to and during plasma membrane invagination. Sry-alpha together with nullo and bnk may provide auxiliary functions, by acting both to stabilize a large and dynamic microfilament structure and regulate its functions. This is Serendipity locus protein alpha (Sry-alpha) from Drosophila subobscura (Fruit fly).